The following is a 463-amino-acid chain: ATP synthase subunit beta (463 aa).

Gly152–Thr159 is a binding site for ATP.

The protein belongs to the ATPase alpha/beta chains family. In terms of assembly, F-type ATPases have 2 components, CF(1) - the catalytic core - and CF(0) - the membrane proton channel. CF(1) has five subunits: alpha(3), beta(3), gamma(1), delta(1), epsilon(1). CF(0) has three main subunits: a(1), b(2) and c(9-12). The alpha and beta chains form an alternating ring which encloses part of the gamma chain. CF(1) is attached to CF(0) by a central stalk formed by the gamma and epsilon chains, while a peripheral stalk is formed by the delta and b chains.

Its subcellular location is the cell inner membrane. It carries out the reaction ATP + H2O + 4 H(+)(in) = ADP + phosphate + 5 H(+)(out). In terms of biological role, produces ATP from ADP in the presence of a proton gradient across the membrane. The catalytic sites are hosted primarily by the beta subunits. This Shewanella putrefaciens (strain CN-32 / ATCC BAA-453) protein is ATP synthase subunit beta.